The chain runs to 453 residues: MARKAVSRKRKAPASPGAGSDAQGQQFGWDHTLHKRKRLPPVKRSLVYYLKNREVRLQNETSYSRVLHGYAAQQLPSLLKEREFHLGTLNKVFASQWLNHRQVVCGTKCNTLFVVDVQTSQITKIPILKDREPGGVTQQGCGIHAIELNPSRTLLATGGDNPNSLAIYRLPTLDPVCVGDDGHKDWIFSIAWISDTMAVSGSRDGSMGLWEVTDDVLTKSDARHNVSRVPVYAHITHKALKDIPKEDTNPDNCKVRALAFNSKNKELGAVSLDGYFHLWKAENTLSKLLSTKLPYCRENVCLAYGSEWSVYAVGSQAHVSFLDPRQPSYNVKSVCSRERGSGIRSVSFYEHIITVGTGQGSLLFYDIRAQRFLEERLSACYGSKPRLAGENLKLTTGKGWLNHDETWRNYFSDIDFFPNAVYTHCYDSSGTKLFVAGGPLPSGLHGNYAGLWS.

Basic residues predominate over residues 1–12 (MARKAVSRKRKA). A disordered region spans residues 1-26 (MARKAVSRKRKAPASPGAGSDAQGQQ). A required for nuclear location and interaction with MOV10 region spans residues 1-38 (MARKAVSRKRKAPASPGAGSDAQGQQFGWDHTLHKRKR). Ser-15 is subject to Phosphoserine. WD repeat units lie at residues 138-178 (QQGC…PVCV), 182-220 (GHKD…LTKS), 250-289 (PDNC…SKLL), and 338-375 (ERGS…FLEE).

The protein belongs to the WD repeat DCAF12 family. Component of the DCX(DCAF12) E3 ubiquitin ligase complex, at least composed of CUL4 (CUL4A or CUL4B), DDB1, DCAF12 and RBX1.

It localises to the cytoplasm. The protein resides in the cytoskeleton. Its subcellular location is the microtubule organizing center. It is found in the centrosome. The protein localises to the nucleus. The protein operates within protein modification; protein ubiquitination. Substrate-recognition component of a DCX (DDB1-CUL4-X-box) E3 ubiquitin-protein ligase complex of the DesCEND (destruction via C-end degrons) pathway, which recognizes a C-degron located at the extreme C terminus of target proteins, leading to their ubiquitination and degradation. The C-degron recognized by the DesCEND pathway is usually a motif of less than ten residues and can be present in full-length proteins, truncated proteins or proteolytically cleaved forms. The DCX(DCAF12) complex specifically recognizes proteins with a diglutamate (Glu-Glu) at the C-terminus, such as MAGEA3, MAGEA6 and CCT5, leading to their ubiquitination and degradation. Ubiquitination of MAGEA3, MAGEA6 by DCX(DCAF12) complex is required for starvation-induced autophagy. Also directly recognizes the C-terminal glutamate-leucine (Glu-Leu) degron as an alternative degron in proteins such as MOV10, leading to their ubiquitination and degradation. Controls the protein level of MOV10 during spermatogenesis and in T cells, especially after their activation. In Macaca fascicularis (Crab-eating macaque), this protein is DDB1- and CUL4-associated factor 12 (DCAF12).